The sequence spans 2098 residues: 1-phosphatidylinositol 3-phosphate 5-kinase (2098 aa).

A disordered region spans residues 1–45; it reads MATDDKTSPTLDSANDLPRSPTSPSHLTHFKPLTPDQDEPPFKSA. Alanine 2 is modified (N-acetylalanine). Serine 23 and serine 48 each carry phosphoserine; by autocatalysis. The tract at residues 57-123 is disordered; the sequence is KERAEGGQGE…EPTFGGHDPR (67 aa). The span at 66–88 shows a compositional bias: polar residues; that stretch reads EQQPLSGSWTSPQLPSRTQSVRS. The residue at position 88 (serine 88) is a Phosphoserine. The FYVE-type zinc-finger motif lies at 158–218; that stretch reads DSQCKECYDC…ACTYCRKIAL (61 aa). Cysteine 164, cysteine 167, cysteine 180, cysteine 183, cysteine 188, cysteine 191, cysteine 210, and cysteine 213 together coordinate Zn(2+). A disordered region spans residues 292-329; the sequence is VQEDAGKSPARNRSASITNLSLDRSGSPMVPSYETSVS. Phosphoserine occurs at positions 299, 307, and 312. The segment covering 302-315 has biased composition (polar residues); sequence RNRSASITNLSLDR. Phosphoserine; by PKB/AKT1 or PKB/AKT2 is present on serine 318. Phosphoserine is present on serine 329. The DEP domain maps to 365 to 440; it reads HSSGMEFQDH…DEYALYRPLQ (76 aa). Residues 442-459 show a composition bias toward polar residues; sequence TEFSETPSPDSDSVNSVE. The segment at 442 to 469 is disordered; the sequence is TEFSETPSPDSDSVNSVEGHSEPSWFKD. The segment covering 460-469 has biased composition (basic and acidic residues); that stretch reads GHSEPSWFKD. At serine 475 the chain carries Phosphoserine. The segment at 484 to 505 is disordered; it reads GDDNLANSASPSKRTSVSSFQS. Residues 488 to 505 show a composition bias toward polar residues; sequence LANSASPSKRTSVSSFQS. A chaperonin-like domain region spans residues 616-868; the sequence is MMALLQQLLH…MICVAYHSQL (253 aa). 2 disordered regions span residues 1161–1191 and 1512–1616; these read RIQPKNSDPFAHSKDASSTSSGQSGSKNEGD and FQQE…STDS. Low complexity predominate over residues 1177–1186; that stretch reads SSTSSGQSGS. Serine 1522 bears the Phosphoserine; by autocatalysis mark. A phosphoserine mark is found at serine 1544 and serine 1549. Residues 1562-1578 are compositionally biased toward low complexity; sequence LTTLSSQSSTSSTHLQL. A Phosphoserine; by autocatalysis modification is found at serine 1669. Residues 1692–1799 form a disordered region; sequence QWNSAEEGLP…PQDEVDGGDT (108 aa). Residues 1704 to 1714 show a composition bias toward low complexity; it reads STSDSRPKSSS. A compositionally biased stretch (polar residues) spans 1723-1735; the sequence is GGQTNRTTETEPQ. Serine 1754 is modified (phosphoserine). In terms of domain architecture, PIPK spans 1758-2084; it reads SSQKRETLRG…RFCEAMDKYF (327 aa). The tract at residues 1842–2098 is catalytic; it reads EEDFIRSLSH…DHWTGLGLNC (257 aa). A phosphoserine; by autocatalysis mark is found at serine 1969 and serine 2053.

In terms of assembly, component of the PI(3,5)P2 regulatory complex/PAS complex, at least composed of PIKFYVE, FIG4 and VAC14. VAC14 nucleates the assembly of the complex and serves as a scaffold by pentamerizing into a star-shaped structure, which can bind a single copy each of PIKFYVE and FIG4 and coordinates their activities. Interacts (via chaperonin-like domain) with RABEPK; the interaction recruits RABEPK to the endosomal membrane. Interacts with SPAG9. Interacts with EGFR. Autophosphorylates which inhibits its own phosphatidylinositol 3-phosphate 5-kinase activity, stimulates FIG4 lipid phosphatase activity and down-regulates lipid product formation. Dephosphorylated by FIG4 in the PI(3,5)P2 regulatory complex, at Ser-48, Ser-1669 and Ser-2053. Phosphorylated in response to insulin at Ser-318 in a protein kinase B (PKB)-dependent manner.

The protein localises to the endosome membrane. It is found in the early endosome membrane. Its subcellular location is the cytoplasmic vesicle. It localises to the phagosome membrane. The protein resides in the late endosome membrane. It catalyses the reaction a 1,2-diacyl-sn-glycero-3-phospho-(1D-myo-inositol-3-phosphate) + ATP = a 1,2-diacyl-sn-glycero-3-phospho-(1D-myo-inositol-3,5-bisphosphate) + ADP + H(+). The enzyme catalyses a 1,2-diacyl-sn-glycero-3-phospho-(1D-myo-inositol) + ATP = a 1,2-diacyl-sn-glycero-3-phospho-(1D-myo-inositol-5-phosphate) + ADP + H(+). It carries out the reaction L-seryl-[protein] + ATP = O-phospho-L-seryl-[protein] + ADP + H(+). With respect to regulation, inhibited by apilimod and YM201636. Dual specificity kinase implicated in myriad essential cellular processes such as maintenance of endomembrane homeostasis, and endocytic-vacuolar pathway, lysosomal trafficking, nuclear transport, stress- or hormone-induced signaling and cell cycle progression. The PI(3,5)P2 regulatory complex regulates both the synthesis and turnover of phosphatidylinositol 3,5-bisphosphate (PtdIns(3,5)P2). Sole enzyme to catalyze the phosphorylation of phosphatidylinositol 3-phosphate on the fifth hydroxyl of the myo-inositol ring, to form (PtdIns(3,5)P2). Also catalyzes the phosphorylation of phosphatidylinositol on the fifth hydroxyl of the myo-inositol ring, to form phosphatidylinositol 5-phosphate (PtdIns(5)P). Has serine-protein kinase activity and is able to autophosphorylate and transphosphorylate. Autophosphorylation inhibits its own phosphatidylinositol 3-phosphate 5-kinase activity, stimulates FIG4 lipid phosphatase activity and down-regulates lipid product formation. Involved in key endosome operations such as fission and fusion in the course of endosomal cargo transport. Required for the maturation of early into late endosomes, phagosomes and lysosomes. Regulates vacuole maturation and nutrient recovery following engulfment of macromolecules, initiates the redistribution of accumulated lysosomal contents back into the endosome network. Critical regulator of the morphology, degradative activity, and protein turnover of the endolysosomal system in macrophages and platelets. In neutrophils, critical to perform chemotaxis, generate ROS, and undertake phagosome fusion with lysosomes. Plays a key role in the processing and presentation of antigens by major histocompatibility complex class II (MHC class II) mediated by CTSS. Regulates melanosome biogenesis by controlling the delivery of proteins from the endosomal compartment to the melanosome. Essential for systemic glucose homeostasis, mediates insulin-induced signals for endosome/actin remodeling in the course of GLUT4 translocation/glucose uptake activation. Supports microtubule-based endosome-to-trans-Golgi network cargo transport, through association with SPAG9 and RABEPK. Mediates EGFR trafficking to the nucleus. Its function is as follows. (Microbial infection) Required for cell entry of coronaviruses SARS-CoV and SARS-CoV-2, as well as human coronavirus EMC (HCoV-EMC) by endocytosis. In Homo sapiens (Human), this protein is 1-phosphatidylinositol 3-phosphate 5-kinase.